The sequence spans 100 residues: NADH-quinone oxidoreductase subunit K (100 aa).

3 helical membrane passes run 2–22 (IPLSWYMALATVLFCIGVAGF), 28–48 (IIVMLLSLELMLNGVNLNLVA), and 64–84 (FVITVAACEAAVGLGIVICLF).

It belongs to the complex I subunit 4L family. NDH-1 is composed of 14 different subunits. Subunits NuoA, H, J, K, L, M, N constitute the membrane sector of the complex.

The protein localises to the cell inner membrane. It catalyses the reaction a quinone + NADH + 5 H(+)(in) = a quinol + NAD(+) + 4 H(+)(out). Its function is as follows. NDH-1 shuttles electrons from NADH, via FMN and iron-sulfur (Fe-S) centers, to quinones in the respiratory chain. The immediate electron acceptor for the enzyme in this species is believed to be ubiquinone. Couples the redox reaction to proton translocation (for every two electrons transferred, four hydrogen ions are translocated across the cytoplasmic membrane), and thus conserves the redox energy in a proton gradient. The polypeptide is NADH-quinone oxidoreductase subunit K (Desulfovibrio desulfuricans (strain ATCC 27774 / DSM 6949 / MB)).